The chain runs to 94 residues: CRISPR-associated endoribonuclease Cas2 (94 aa).

It belongs to the CRISPR-associated endoribonuclease Cas2 protein family. E.coli-subtype subfamily. Homodimer. Part of the Cas1-Cas2 complex. Forms a hexamer with 2 Cas1 dimers sandwiching a Cas2 dimer. The DNA lies across a flat surface extending from 1 Cas1 dimer, across the Cas2 dimer and contacting the other Cas1 dimer. Only 1 Cas1 protein from each dimer is catalytic, the other interacts with the Cas2 dimer and possibly target DNA.

Its function is as follows. CRISPR (clustered regularly interspaced short palindromic repeat), is an adaptive immune system that provides protection against mobile genetic elements (viruses, transposable elements and conjugative plasmids). CRISPR clusters contain sequences complementary to antecedent mobile elements and target invading nucleic acids. CRISPR clusters are transcribed and processed into CRISPR RNA (crRNA). The Cas1-Cas2 complex is involved in CRISPR adaptation, the first stage of CRISPR immunity, being required for the addition/removal of CRISPR spacers at the leader end of the CRISPR locus. The Cas1-Cas2 complex introduces staggered nicks into both strands of the CRISPR array near the leader repeat and joins the 5'-ends of the repeat strands with the 3'-ends of the new spacer sequence. Spacer DNA integration requires supercoiled target DNA and 3'-OH ends on the inserted (spacer) DNA and probably initiates with a nucleophilic attack of the C 3'-OH end of the protospacer on the minus strand of the first repeat sequence. Expression of Cas1-Cas2 in a strain lacking both genes permits spacer acquisition. Cas2 not seen to bind DNA alone; the Cas1-Cas2 complex preferentially binds CRISPR-locus DNA. Highest binding is seen to a dual forked DNA complex with 3'-overhangs and a protospacer-adjacent motif-complement specifically positioned. The protospacer DNA lies across a flat surface extending from 1 Cas1 dimer, across the Cas2 dimer and contacting the other Cas1 dimer; the 23 bp-long ds section of the DNA is bracketed by 1 Tyr-22 from each of the Cas1 dimers. Cas1 cuts within the 3'-overhang, to generate a 33-nucleotide DNA that is probably incorporated into the CRISPR leader by a cut-and-paste mechanism. This subunit's probable nuclease activity is not required for spacer acquisition. This chain is CRISPR-associated endoribonuclease Cas2 (ygbF), found in Escherichia coli (strain K12).